We begin with the raw amino-acid sequence, 221 residues long: NEP1-interacting protein-like 1 (221 aa).

Helical transmembrane passes span 35 to 55 (LFTFFFALVGTLLGALTGALI), 69 to 89 (VGAISGAVFSIEVFESSLLLW), and 95 to 115 (GIGCLLYLIDVIASLLSGRLV). Residues 176–218 (CSVCLQDFQVGETVRSLPHCHHMFHLPCIDKWLRRHASCPLCR) form an RING-type; atypical zinc finger.

It belongs to the RING-type zinc finger family. NIP subfamily.

The protein resides in the membrane. May be involved in the early steps of the plant defense signaling pathway. This Arabidopsis thaliana (Mouse-ear cress) protein is NEP1-interacting protein-like 1 (ATL27).